Consider the following 706-residue polypeptide: MVRKHGWQLPAHTLQVIAITVFCLLVVAFYAFFAPFVGGRIWEYVLIGVYSPVAILVFVLYVRCTAINPADPRIMSIFDTGVNGDGMVRGLSRNYDETGSQLQASPSVVSRSSTVAGNSSVKGSVEDAQRVESVSRRSCYNPLAVFCYVFVVEDCRKKEGPAEEQGNSEEALFCTLCNCEVRKFSKHCRSCDKCVDCFDHHCKWLNNCVGRKNYVTFVSLMSASLLWLIIEAAVGIAVIVRVFVNKQTMETEIVNRLGNSFSRAPLAAVVGLCTAVAIFACFPLGELLFFHMLLIKKGITTYEYVVAMRAMSEAPDGASVDEEIQNVLYSPTGSATTGFSGGSSLGLPYRGVWCTPPRVFDNQDEVIPHLDPCMVPSTVDPDAPGSEKGTKALKRPVKRNAWKLAKLDPNEAARAAARARASSSVLRPIDNRHLPDNDLSSIGTVSIISSVSTDANVAASKEIRNNDLRSSLSRNSFAPSQGSRDEYDTGSHGMSNLSSPSHVHESVTLAPLPQNPTIVGNRFTATSHHMHSTFDDKVLHRGNDADPLFLFAPATSHLRDVRKTSVVWDPEAGRYVSAPVTTTSEVRNRLLNPSSQTASTQNPRPILPAHDSSSGSSALRDPLPLHQAERRLTYTGDSIFYGGPLINIPTRDTPRSGRGLVRDVQDRLASTVHRDARIRRDSTSNQLPVFAPGGLGANSQTGSNIK.

The next 2 helical transmembrane spans lie at 16-36 (VIAI…FAPF) and 41-61 (IWEY…FVLY). Residues 172–222 (LFCTLCNCEVRKFSKHCRSCDKCVDCFDHHCKWLNNCVGRKNYVTFVSLMS) form the DHHC domain. Cysteine 202 serves as the catalytic S-palmitoyl cysteine intermediate. The next 2 helical transmembrane spans lie at 220-240 (LMSA…AVIV) and 275-295 (AVAI…MLLI). Disordered regions lie at residues 470 to 505 (SSLS…HVHE), 591 to 621 (LNPS…ALRD), and 680 to 706 (RDST…SNIK). Composition is skewed to polar residues over residues 492–501 (HGMSNLSSPS), 591–603 (LNPS…TQNP), and 697–706 (ANSQTGSNIK).

The protein belongs to the DHHC palmitoyltransferase family.

It localises to the cell membrane. The protein localises to the cytoplasmic vesicle membrane. The catalysed reaction is L-cysteinyl-[protein] + hexadecanoyl-CoA = S-hexadecanoyl-L-cysteinyl-[protein] + CoA. In terms of biological role, palmitoyl acyltransferase. The polypeptide is Probable protein S-acyltransferase 20 (PAT20) (Arabidopsis thaliana (Mouse-ear cress)).